Here is a 200-residue protein sequence, read N- to C-terminus: Urease accessory protein UreG (200 aa).

Residue 8–15 participates in GTP binding; it reads GPVGSGKT.

It belongs to the SIMIBI class G3E GTPase family. UreG subfamily. Homodimer. UreH, UreF and UreG form a complex that acts as a GTP-hydrolysis-dependent molecular chaperone, activating the urease apoprotein by helping to assemble the nickel containing metallocenter of UreC. The UreE protein probably delivers the nickel.

Its subcellular location is the cytoplasm. Functionally, facilitates the functional incorporation of the urease nickel metallocenter. This process requires GTP hydrolysis, probably effectuated by UreG. This Helicobacter hepaticus (strain ATCC 51449 / 3B1) protein is Urease accessory protein UreG.